Reading from the N-terminus, the 299-residue chain is tRNA dimethylallyltransferase (299 aa).

10 to 17 (GPTASGKS) is a binding site for ATP. 12-17 (TASGKS) serves as a coordination point for substrate.

It belongs to the IPP transferase family. As to quaternary structure, monomer. Requires Mg(2+) as cofactor.

It catalyses the reaction adenosine(37) in tRNA + dimethylallyl diphosphate = N(6)-dimethylallyladenosine(37) in tRNA + diphosphate. Catalyzes the transfer of a dimethylallyl group onto the adenine at position 37 in tRNAs that read codons beginning with uridine, leading to the formation of N6-(dimethylallyl)adenosine (i(6)A). This is tRNA dimethylallyltransferase from Malacoplasma penetrans (strain HF-2) (Mycoplasma penetrans).